We begin with the raw amino-acid sequence, 49 residues long: Large ribosomal subunit protein bL33 (49 aa).

It belongs to the bacterial ribosomal protein bL33 family.

This is Large ribosomal subunit protein bL33 from Moorella thermoacetica (strain ATCC 39073 / JCM 9320).